The sequence spans 170 residues: Small ribosomal subunit protein uS3mB (170 aa).

The transit peptide at 1 to 30 (MAAPVMSAFGRLQGLIRTERSLLTHVQSRC) directs the protein to the mitochondrion.

This sequence belongs to the universal ribosomal protein uS3 family. In terms of assembly, component of the mitochondrial ribosome small subunit (28S) which comprises a 12S rRNA and about 30 distinct proteins.

Its subcellular location is the mitochondrion. This is Small ribosomal subunit protein uS3mB (mrps24-b) from Xenopus laevis (African clawed frog).